The sequence spans 214 residues: Probable chemoreceptor glutamine deamidase CheD (214 aa).

It belongs to the CheD family.

It carries out the reaction L-glutaminyl-[protein] + H2O = L-glutamyl-[protein] + NH4(+). In terms of biological role, probably deamidates glutamine residues to glutamate on methyl-accepting chemotaxis receptors (MCPs), playing an important role in chemotaxis. This chain is Probable chemoreceptor glutamine deamidase CheD, found in Vibrio vulnificus (strain YJ016).